Here is a 391-residue protein sequence, read N- to C-terminus: Mannose-6-phosphate isomerase (391 aa).

The Zn(2+) site is built by Q97, H99, E134, and H255. R274 is a catalytic residue. K280 bears the N6-acetyllysine mark.

The protein belongs to the mannose-6-phosphate isomerase type 1 family. The cofactor is Zn(2+).

Its subcellular location is the cytoplasm. The enzyme catalyses D-mannose 6-phosphate = D-fructose 6-phosphate. Involved in the conversion of glucose to GDP-L-fucose, which can be converted to L-fucose, a capsular polysaccharide. In Escherichia coli (strain K12), this protein is Mannose-6-phosphate isomerase (manA).